The sequence spans 465 residues: Argininosuccinate lyase (465 aa).

Belongs to the lyase 1 family. Argininosuccinate lyase subfamily.

It localises to the cytoplasm. The catalysed reaction is 2-(N(omega)-L-arginino)succinate = fumarate + L-arginine. The protein operates within amino-acid biosynthesis; L-arginine biosynthesis; L-arginine from L-ornithine and carbamoyl phosphate: step 3/3. The chain is Argininosuccinate lyase from Deinococcus deserti (strain DSM 17065 / CIP 109153 / LMG 22923 / VCD115).